Consider the following 863-residue polypeptide: Ribosomal protein S6 kinase alpha-5 (863 aa).

Residues methionine 1–glycine 21 are compositionally biased toward gly residues. Positions methionine 1–glutamate 22 are disordered. In terms of domain architecture, Protein kinase 1 spans phenylalanine 48–phenylalanine 317. Residues leucine 54–valine 62 and lysine 80 contribute to the ATP site. Aspartate 176 serves as the catalytic Proton acceptor. Serine 211 carries the phosphoserine; by autocatalysis modification. Residues glutamate 318–asparagine 386 enclose the AGC-kinase C-terminal domain. Serine 359 bears the Phosphoserine; by MAPK1, MAPK3 and MAPK14 mark. Residues serine 375 and serine 380 each carry the phosphoserine; by autocatalysis modification. Residues aspartate 428–isoleucine 675 enclose the Protein kinase 2 domain. ATP contacts are provided by residues leucine 431 to arginine 440 and lysine 454. The active-site Proton acceptor is the aspartate 608. Threonine 645 is modified (phosphothreonine; by MAPK1, MAPK3 and MAPK14). Serine 711, serine 721, serine 755, and serine 759 each carry phosphoserine. Phosphothreonine is present on threonine 764. The disordered stretch occupies residues alanine 805–aspartate 863. Residues threonine 813–serine 832 are compositionally biased toward low complexity. Phosphoserine; by autocatalysis occurs at positions 814, 816, and 822. Over residues glutamine 833–aspartate 863 the composition is skewed to polar residues. Position 862 is a phosphoserine (serine 862).

This sequence belongs to the protein kinase superfamily. AGC Ser/Thr protein kinase family. S6 kinase subfamily. As to quaternary structure, forms a complex with either MAPK1/ERK2 or MAPK3/ERK1 in quiescent cells which transiently dissociates following mitogenic stimulation. Also associates with MAPK14/p38-alpha. Activated RPS6KA5 associates with and phosphorylates the NF-kappa-B p65 subunit RELA. Interacts with CREBBP and EP300. Requires Mg(2+) as cofactor. In terms of processing, ser-375 and Thr-645 phosphorylation is required for kinase activity. Ser-375 and Ser-211 are autophosphorylated by the C-terminal kinase domain, and their phosphorylation is essential for the catalytic activity of the N-terminal kinase domain. Phosphorylated at Ser-359, Thr-645 and Thr-764 by MAPK1/ERK2, MAPK3/ERK1 and MAPK14/p38-alpha. Autophosphorylated at Ser-814, Ser-816 and Ser-822 by the N-terminal kinase domain. Post-translationally, ubiquitinated.

The protein resides in the nucleus. The enzyme catalyses L-seryl-[protein] + ATP = O-phospho-L-seryl-[protein] + ADP + H(+). It carries out the reaction L-threonyl-[protein] + ATP = O-phospho-L-threonyl-[protein] + ADP + H(+). Activated by phosphorylation at Ser-359, Thr-645 and Thr-764 by MAPK1/ERK2, MAPK3/ERK1 and MAPK14/p38-alpha, and by further autophosphorylation of Ser-211, Ser-375 and Ser-380 by the activated C-terminal kinase domain. The active N-terminal kinase domain finally phosphorylates downstream substrates, as well as Ser-814, Ser-816 and Ser-822 in its own C-terminal region. In terms of biological role, serine/threonine-protein kinase that is required for the mitogen or stress-induced phosphorylation of the transcription factors CREB1 and ATF1 and for the regulation of the transcription factors RELA, STAT3 and ETV1/ER81, and that contributes to gene activation by histone phosphorylation and functions in the regulation of inflammatory genes. Phosphorylates CREB1 and ATF1 in response to mitogenic or stress stimuli such as UV-C irradiation, epidermal growth factor (EGF) and anisomycin. Plays an essential role in the control of RELA transcriptional activity in response to TNF and upon glucocorticoid, associates in the cytoplasm with the glucocorticoid receptor NR3C1 and contributes to RELA inhibition and repression of inflammatory gene expression. In skeletal myoblasts is required for phosphorylation of RELA at 'Ser-276' during oxidative stress. In erythropoietin-stimulated cells, is necessary for the 'Ser-727' phosphorylation of STAT3 and regulation of its transcriptional potential. Phosphorylates ETV1/ER81 at 'Ser-191' and 'Ser-216', and thereby regulates its ability to stimulate transcription, which may be important during development and breast tumor formation. Directly represses transcription via phosphorylation of 'Ser-1' of histone H2A. Phosphorylates 'Ser-10' of histone H3 in response to mitogenics, stress stimuli and EGF, which results in the transcriptional activation of several immediate early genes, including proto-oncogenes c-fos/FOS and c-jun/JUN. May also phosphorylate 'Ser-28' of histone H3. Mediates the mitogen- and stress-induced phosphorylation of high mobility group protein 1 (HMGN1/HMG14). In lipopolysaccharide-stimulated primary macrophages, acts downstream of the Toll-like receptor TLR4 to limit the production of pro-inflammatory cytokines. Functions probably by inducing transcription of the MAP kinase phosphatase DUSP1 and the anti-inflammatory cytokine interleukin 10 (IL10), via CREB1 and ATF1 transcription factors. Plays a role in neuronal cell death by mediating the downstream effects of excitotoxic injury. Phosphorylates TRIM7 at 'Ser-106' in response to growth factor signaling via the MEK/ERK pathway, thereby stimulating its ubiquitin ligase activity. This Mus musculus (Mouse) protein is Ribosomal protein S6 kinase alpha-5 (Rps6ka5).